We begin with the raw amino-acid sequence, 906 residues long: Cadherin-2 (906 aa).

A signal peptide spans 1–25 (MCRIVGAPRTLLPLLAALLQASVDA). A propeptide spanning residues 26 to 159 (SGEISLCKTG…HNGYLQRQKR (134 aa)) is cleaved from the precursor. 2 positions are modified to phosphoserine: Ser-96 and Ser-135. Cadherin domains lie at 160 to 267 (DWVI…RPEF), 268 to 392 (LHQV…GEVP), 393 to 497 (ENRV…NPYF), 498 to 603 (APNP…DNAP), and 604 to 714 (QVLP…DVDR). Over 160-724 (DWVIPPINLP…IVGAGLGTGA (565 aa)) the chain is Extracellular. A Ca(2+)-binding site is contributed by Glu-170. Asn-190 carries N-linked (GlcNAc...) asparagine glycosylation. Ca(2+) contacts are provided by Asp-226, Glu-228, Asp-259, Met-260, Asn-261, Asp-262, and Asn-263. An N-linked (GlcNAc...) asparagine glycan is attached at Asn-273. Positions 293, 295, and 301 each coordinate Ca(2+). Asn-325 carries an N-linked (GlcNAc...) asparagine glycan. Residue Asp-353 participates in Ca(2+) binding. Asn-357, Asn-402, Asn-572, Asn-622, Asn-651, and Asn-692 each carry an N-linked (GlcNAc...) asparagine glycan. A helical transmembrane segment spans residues 725 to 746 (IIAILLCIIILLILVLMFVVWM). Topologically, residues 747-906 (KRRDKERQAK…LADMYGGGDD (160 aa)) are cytoplasmic. A compositionally biased stretch (low complexity) spans 863 to 880 (SGSTAGSLSSLNSSSSGG). Positions 863–884 (SGSTAGSLSSLNSSSSGGEQDY) are disordered.

As to quaternary structure, homodimer (via extracellular region). Can also form heterodimers with other cadherins (via extracellular region). Dimerization occurs in trans, i.e. with a cadherin chain from another cell. Interacts with CDCP1. Interacts with PCDH8; this complex may also include TAOK2. The interaction with PCDH8 may lead to internalization through TAOK2/p38 MAPK pathway. Identified in a complex containing FGFR4, NCAM1, CDH2, PLCG1, FRS2, SRC, SHC1, GAP43 and CTTN. May interact with OBSCN (via protein kinase domain 2). Interacts with FBXO45. Post-translationally, cleaved by MMP24. Ectodomain cleavage leads to the generation of a soluble 90 kDa N-terminal soluble fragment and a 45 kDa membrane-bound C-terminal fragment 1 (CTF1), which is further cleaved by gamma-secretase into a 35 kDa. Cleavage in neural stem cells by MMP24 affects CDH2-mediated anchorage of neural stem cells to ependymocytes in the adult subependymal zone, leading to modulate neural stem cell quiescence. In terms of processing, may be phosphorylated by OBSCN. As to expression, detected in liver, kidney, heart and brain capillaries.

It localises to the cell membrane. The protein resides in the sarcolemma. It is found in the cell junction. The protein localises to the cell surface. Its subcellular location is the desmosome. It localises to the adherens junction. Functionally, calcium-dependent cell adhesion protein; preferentially mediates homotypic cell-cell adhesion by dimerization with a CDH2 chain from another cell. Cadherins may thus contribute to the sorting of heterogeneous cell types. Acts as a regulator of neural stem cells quiescence by mediating anchorage of neural stem cells to ependymocytes in the adult subependymal zone: upon cleavage by MMP24, CDH2-mediated anchorage is affected, leading to modulate neural stem cell quiescence. Plays a role in cell-to-cell junction formation between pancreatic beta cells and neural crest stem (NCS) cells, promoting the formation of processes by NCS cells. Required for proper neurite branching. Required for pre- and postsynaptic organization. CDH2 may be involved in neuronal recognition mechanism. In hippocampal neurons, may regulate dendritic spine density. The chain is Cadherin-2 (CDH2) from Bos taurus (Bovine).